A 549-amino-acid polypeptide reads, in one-letter code: uncharacterized protein (549 aa).

Transmembrane regions (helical) follow at residues 27–47 (ILRFAIPTFFFALFSAAYVFV), 108–128 (PIVVILNAITIFVPLGTGVIF), 146–166 (TGLVSTTLFALVTQIIVLAIA), 197–217 (AVAIGSEYVYILIGFNIIPML), 233–253 (FIAIVPPLSNLLNVLFVFLLV), 265–285 (VAAILVYFITFMAYVVYLISL), 308–328 (FLVISMVGLASFFRNGSLSIL), 352–372 (LVLLTGPIAIANLTSAAIFGV), 399–419 (TLLVCLVFAALLYLILAVGLG), 434–454 (LMLANQFSLIVQAQVFFVAIG), 472–492 (IVSLMQGVIVFVPLLFIFQAI), and 501–521 (IFIWLLTANAALAGLINVLIG).

Its subcellular location is the cell membrane. This is an uncharacterized protein from Mycoplasma pneumoniae (strain ATCC 29342 / M129 / Subtype 1) (Mycoplasmoides pneumoniae).